We begin with the raw amino-acid sequence, 343 residues long: Serpentine receptor class alpha-11 (343 aa).

Over 1–24 (MSSPDTPVCASPQQMEMYNSHFYT) the chain is Extracellular. Residues 25–45 (CALFFNLLIAFTSMTLIIMAI) form a helical membrane-spanning segment. At 46-60 (RKLLTESIINTSTRM) the chain is on the cytoplasmic side. The chain crosses the membrane as a helical span at residues 61 to 81 (FLIVGLLCCSLHQTAYIVLRV). At 82-106 (QVIFQILFKLDQPCKLYYKAYDCKY) the chain is on the extracellular side. The helical transmembrane segment at 107–127 (VTFSLVAGNTGMIFIQSAMTI) threads the bilayer. Over 128 to 146 (DRILTTVFTNLWPKLKYWP) the chain is Cytoplasmic. A helical transmembrane segment spans residues 147–167 (GVILSSFMIGCNFTNVQFIFW). Over 168 to 192 (NDPLTDYVPTCGQFPPKSVGRFQKF) the chain is Extracellular. Residues 193-213 (LEIALYMSLAHMVINVIILYI) form a helical membrane-spanning segment. The Cytoplasmic segment spans residues 214–247 (NVVQDRRQRLVSTHDQSQSFDVNQRFQSRVALKS). The helical transmembrane segment at 248–268 (TQAIFFLSMSQFLSCFLYTIF) threads the bilayer. Residues 269 to 291 (TKLYLTLQPDMTPLQSGLTLALT) are Extracellular-facing. A helical transmembrane segment spans residues 292–312 (YTTPYACIAIPSLIMVTLTFI). Residues 313 to 343 (RNQRHRSINALRSQTETGDQYMQKIKKIWDK) are Cytoplasmic-facing.

It belongs to the nematode receptor-like protein sra family.

The protein localises to the membrane. Its function is as follows. A G protein-coupled receptor required for olfactory imprinting a requisite in ordorant response such as benzaldehyde and isoamylalcohol. This chain is Serpentine receptor class alpha-11, found in Caenorhabditis briggsae.